A 333-amino-acid polypeptide reads, in one-letter code: UPF0284 protein TGAM_0534 (333 aa).

It belongs to the UPF0284 family.

This chain is UPF0284 protein TGAM_0534, found in Thermococcus gammatolerans (strain DSM 15229 / JCM 11827 / EJ3).